A 255-amino-acid chain; its full sequence is Thiazole synthase (255 aa).

Lys96 functions as the Schiff-base intermediate with DXP in the catalytic mechanism. 1-deoxy-D-xylulose 5-phosphate contacts are provided by residues Gly157, 183–184 (AG), and 205–206 (NT).

The protein belongs to the ThiG family. In terms of assembly, homotetramer. Forms heterodimers with either ThiH or ThiS.

The protein localises to the cytoplasm. It carries out the reaction [ThiS sulfur-carrier protein]-C-terminal-Gly-aminoethanethioate + 2-iminoacetate + 1-deoxy-D-xylulose 5-phosphate = [ThiS sulfur-carrier protein]-C-terminal Gly-Gly + 2-[(2R,5Z)-2-carboxy-4-methylthiazol-5(2H)-ylidene]ethyl phosphate + 2 H2O + H(+). It participates in cofactor biosynthesis; thiamine diphosphate biosynthesis. Functionally, catalyzes the rearrangement of 1-deoxy-D-xylulose 5-phosphate (DXP) to produce the thiazole phosphate moiety of thiamine. Sulfur is provided by the thiocarboxylate moiety of the carrier protein ThiS. In vitro, sulfur can be provided by H(2)S. The sequence is that of Thiazole synthase from Bacillus licheniformis (strain ATCC 14580 / DSM 13 / JCM 2505 / CCUG 7422 / NBRC 12200 / NCIMB 9375 / NCTC 10341 / NRRL NRS-1264 / Gibson 46).